The following is a 509-amino-acid chain: Methionine--tRNA ligase (509 aa).

The 'HIGH' region motif lies at 12–22 (YYPSGDLHLGH). A 'KMSKS' region motif is present at residues 302–306 (KMSKS). ATP is bound at residue lysine 305.

It belongs to the class-I aminoacyl-tRNA synthetase family. MetG type 2B subfamily. As to quaternary structure, monomer.

The protein localises to the cytoplasm. It carries out the reaction tRNA(Met) + L-methionine + ATP = L-methionyl-tRNA(Met) + AMP + diphosphate. Is required not only for elongation of protein synthesis but also for the initiation of all mRNA translation through initiator tRNA(fMet) aminoacylation. This Mycoplasmopsis pulmonis (strain UAB CTIP) (Mycoplasma pulmonis) protein is Methionine--tRNA ligase (metG).